The primary structure comprises 131 residues: Probable ATP synthase subunit g 1, mitochondrial (131 aa).

Belongs to the ATPase g subunit family. As to quaternary structure, subunit of the F-type ATPase which has 2 components, CF(1) - the catalytic core - and CF(0) - the membrane proton channel.

The protein resides in the mitochondrion membrane. Its function is as follows. Mitochondrial membrane ATP synthase (F(1)F(0) ATP synthase or Complex V) produces ATP from ADP in the presence of a proton gradient across the membrane which is generated by electron transport complexes of the respiratory chain. F-type ATPases consist of two structural domains, F(1) - containing the extramembraneous catalytic core, and F(0) - containing the membrane proton channel, linked together by a central stalk and a peripheral stalk. During catalysis, ATP synthesis in the catalytic domain of F(1) is coupled via a rotary mechanism of the central stalk subunits to proton translocation. Part of the complex F(0) domain. Minor subunit located with subunit a in the membrane. In Caenorhabditis elegans, this protein is Probable ATP synthase subunit g 1, mitochondrial.